A 78-amino-acid polypeptide reads, in one-letter code: Acyl carrier protein (78 aa).

Residues 1–76 (MALFEDIQAV…DVVKYIEDNK (76 aa)) enclose the Carrier domain. S36 is modified (O-(pantetheine 4'-phosphoryl)serine).

This sequence belongs to the acyl carrier protein (ACP) family. In terms of processing, 4'-phosphopantetheine is transferred from CoA to a specific serine of apo-ACP by AcpS. This modification is essential for activity because fatty acids are bound in thioester linkage to the sulfhydryl of the prosthetic group.

Its subcellular location is the cytoplasm. It participates in lipid metabolism; fatty acid biosynthesis. Functionally, carrier of the growing fatty acid chain in fatty acid biosynthesis. This chain is Acyl carrier protein, found in Helicobacter pylori (strain G27).